A 71-amino-acid chain; its full sequence is Ranatuerin-2P (71 aa).

The first 20 residues, 1–20 (MFTMKKSLLLFFFLGTISLS), serve as a signal peptide directing secretion. Residues 21 to 44 (LCEQERGADEDDGVEITEEEVKRG) constitute a propeptide that is removed on maturation. C66 and C71 are oxidised to a cystine.

As to expression, expressed by the skin glands.

The protein localises to the secreted. Its function is as follows. Antibacterial activity against Gram-positive bacterium S.aureus and Gram-negative bacterium E.coli. Has activity against C.albicans. The protein is Ranatuerin-2P of Lithobates pipiens (Northern leopard frog).